The following is an 80-amino-acid chain: UPF0291 protein EF_1580 (80 aa).

The segment at 60–80 (TDVTPEKLKKIQREKGLHNRK) is disordered. Residues 63–80 (TPEKLKKIQREKGLHNRK) are compositionally biased toward basic and acidic residues.

It belongs to the UPF0291 family.

It localises to the cytoplasm. In Enterococcus faecalis (strain ATCC 700802 / V583), this protein is UPF0291 protein EF_1580.